We begin with the raw amino-acid sequence, 206 residues long: Ribosome maturation factor RimP (206 aa).

The disordered stretch occupies residues glycine 164–lysine 206. The span at aspartate 178–lysine 206 shows a compositional bias: acidic residues.

It belongs to the RimP family.

It localises to the cytoplasm. Its function is as follows. Required for maturation of 30S ribosomal subunits. In Rhodococcus erythropolis (strain PR4 / NBRC 100887), this protein is Ribosome maturation factor RimP.